The chain runs to 447 residues: tRNA-2-methylthio-N(6)-dimethylallyladenosine synthase (447 aa).

The MTTase N-terminal domain maps to K10–Q128. Positions 19, 55, 89, 165, 169, and 172 each coordinate [4Fe-4S] cluster. The Radical SAM core domain occupies R151–K382. A TRAM domain is found at K384–E447.

Belongs to the methylthiotransferase family. MiaB subfamily. As to quaternary structure, monomer. It depends on [4Fe-4S] cluster as a cofactor.

It is found in the cytoplasm. The enzyme catalyses N(6)-dimethylallyladenosine(37) in tRNA + (sulfur carrier)-SH + AH2 + 2 S-adenosyl-L-methionine = 2-methylsulfanyl-N(6)-dimethylallyladenosine(37) in tRNA + (sulfur carrier)-H + 5'-deoxyadenosine + L-methionine + A + S-adenosyl-L-homocysteine + 2 H(+). Functionally, catalyzes the methylthiolation of N6-(dimethylallyl)adenosine (i(6)A), leading to the formation of 2-methylthio-N6-(dimethylallyl)adenosine (ms(2)i(6)A) at position 37 in tRNAs that read codons beginning with uridine. The chain is tRNA-2-methylthio-N(6)-dimethylallyladenosine synthase from Clostridium perfringens (strain SM101 / Type A).